The primary structure comprises 571 residues: Leucine aminopeptidase A1, chloroplastic (571 aa).

The N-terminal 53 residues, 1–53, are a transit peptide targeting the chloroplast; it reads MATLRVSSLFASSSSSLHSNPSVFTKYQSSPKWAFSFPVTPLCSKRSKRIVHC. Positions 342 and 347 each coordinate Mg(2+). Lys-354 is an active-site residue. Mg(2+)-binding residues include Asp-367, Asp-427, and Glu-429. Arg-431 is a catalytic residue.

Belongs to the peptidase M17 family. Homohexamer (dimer of homotrimers). It depends on Mg(2+) as a cofactor. Observed during floral development. Expressed in healthy and senescent leaves, cotyledons (emergence from seed coats), pistils, sepals, petals, stamens, and floral buds (at protein level). Present at very low levels in healthy leaves.

The protein resides in the plastid. It is found in the chloroplast. It catalyses the reaction Release of an N-terminal amino acid, Xaa-|-Yaa-, in which Xaa is preferably Leu, but may be other amino acids including Pro although not Arg or Lys, and Yaa may be Pro. Amino acid amides and methyl esters are also readily hydrolyzed, but rates on arylamides are exceedingly low.. It carries out the reaction Release of N-terminal proline from a peptide.. Functionally, catalyzes the removal of unsubstituted N-terminal amino acids from various peptides. When associated as homohexamer, catalyzes the proteolyzes of Xaa-Leu dipeptides. Possesses leucine aminopeptidase activity against the model substrate leucine-amido methyl coumarin. Presumably involved in the processing and regular turnover of intracellular proteins. Regulates wound signaling and has a role in insect defense. Its function is as follows. Functions as a molecular chaperone to protect proteins from heat-induced damage. The protein is Leucine aminopeptidase A1, chloroplastic of Solanum lycopersicum (Tomato).